The sequence spans 190 residues: GTP cyclohydrolase 1 (190 aa).

Residues C80, H83, and C151 each coordinate Zn(2+).

The protein belongs to the GTP cyclohydrolase I family. Toroid-shaped homodecamer, composed of two pentamers of five dimers.

The catalysed reaction is GTP + H2O = 7,8-dihydroneopterin 3'-triphosphate + formate + H(+). It functions in the pathway cofactor biosynthesis; 7,8-dihydroneopterin triphosphate biosynthesis; 7,8-dihydroneopterin triphosphate from GTP: step 1/1. In Rickettsia typhi (strain ATCC VR-144 / Wilmington), this protein is GTP cyclohydrolase 1.